An 85-amino-acid chain; its full sequence is UPF0386 protein Plav_1374 (85 aa).

It belongs to the UPF0386 family.

This is UPF0386 protein Plav_1374 from Parvibaculum lavamentivorans (strain DS-1 / DSM 13023 / NCIMB 13966).